Reading from the N-terminus, the 299-residue chain is Virginiamycin B lyase (299 aa).

Histidine 229 serves as a coordination point for substrate. Glutamate 269 lines the Mg(2+) pocket. Histidine 271 acts as the Proton acceptor in catalysis. Residue glutamate 286 participates in Mg(2+) binding.

This sequence belongs to the Vgb family. In terms of assembly, monomer. Mg(2+) is required as a cofactor.

Its function is as follows. Inactivates the type B streptogramin antibiotics by linearizing the lactone ring at the ester linkage, generating a free phenylglycine carboxylate and converting the threonyl moiety into 2-amino-butenoic acid. This chain is Virginiamycin B lyase, found in Bordetella parapertussis (strain 12822 / ATCC BAA-587 / NCTC 13253).